Reading from the N-terminus, the 303-residue chain is Protoheme IX farnesyltransferase (303 aa).

9 helical membrane passes run 17–37 (GVVM…TEPA), 42–62 (LATF…SAAI), 91–111 (AAIT…YFLV), 114–134 (LTAW…TLYL), 142–162 (IVIG…AVTG), 168–188 (AWLL…ALAI), 208–228 (IPFT…CTLL), 231–251 (LTGM…LVFL), and 270–290 (FGYS…DHYL).

It belongs to the UbiA prenyltransferase family. Protoheme IX farnesyltransferase subfamily.

The protein resides in the cell inner membrane. The catalysed reaction is heme b + (2E,6E)-farnesyl diphosphate + H2O = Fe(II)-heme o + diphosphate. It participates in porphyrin-containing compound metabolism; heme O biosynthesis; heme O from protoheme: step 1/1. Its function is as follows. Converts heme B (protoheme IX) to heme O by substitution of the vinyl group on carbon 2 of heme B porphyrin ring with a hydroxyethyl farnesyl side group. The chain is Protoheme IX farnesyltransferase from Alcanivorax borkumensis (strain ATCC 700651 / DSM 11573 / NCIMB 13689 / SK2).